The sequence spans 539 residues: Phosphoenolpyruvate carboxykinase (ATP) (539 aa).

Arg-64, Tyr-206, and Lys-212 together coordinate substrate. Residues Lys-212, His-231, and 247–255 (GLSGTGKTT) contribute to the ATP site. 2 residues coordinate Mn(2+): Lys-212 and His-231. Asp-268 is a Mn(2+) binding site. ATP is bound by residues Glu-296, Arg-332, 448 to 449 (RI), and Thr-454. Arg-332 is a binding site for substrate.

The protein belongs to the phosphoenolpyruvate carboxykinase (ATP) family. As to quaternary structure, monomer. Mn(2+) is required as a cofactor.

Its subcellular location is the cytoplasm. The enzyme catalyses oxaloacetate + ATP = phosphoenolpyruvate + ADP + CO2. It participates in carbohydrate biosynthesis; gluconeogenesis. Functionally, involved in the gluconeogenesis. Catalyzes the conversion of oxaloacetate (OAA) to phosphoenolpyruvate (PEP) through direct phosphoryl transfer between the nucleoside triphosphate and OAA. The polypeptide is Phosphoenolpyruvate carboxykinase (ATP) (Salmonella gallinarum (strain 287/91 / NCTC 13346)).